The following is a 185-amino-acid chain: Large ribosomal subunit protein uL5 (185 aa).

Belongs to the universal ribosomal protein uL5 family. Part of the 50S ribosomal subunit; part of the 5S rRNA/L5/L18/L25 subcomplex. Contacts the 5S rRNA and the P site tRNA. Forms a bridge to the 30S subunit in the 70S ribosome.

In terms of biological role, this is one of the proteins that bind and probably mediate the attachment of the 5S RNA into the large ribosomal subunit, where it forms part of the central protuberance. In the 70S ribosome it contacts protein S13 of the 30S subunit (bridge B1b), connecting the 2 subunits; this bridge is implicated in subunit movement. Contacts the P site tRNA; the 5S rRNA and some of its associated proteins might help stabilize positioning of ribosome-bound tRNAs. The polypeptide is Large ribosomal subunit protein uL5 (Chelativorans sp. (strain BNC1)).